The following is a 162-amino-acid chain: Crossover junction endodeoxyribonuclease RuvC (162 aa).

Catalysis depends on residues Asp-8, Glu-69, and His-141. Mg(2+) contacts are provided by Asp-8, Glu-69, and His-141.

This sequence belongs to the RuvC family. Homodimer which binds Holliday junction (HJ) DNA. The HJ becomes 2-fold symmetrical on binding to RuvC with unstacked arms; it has a different conformation from HJ DNA in complex with RuvA. In the full resolvosome a probable DNA-RuvA(4)-RuvB(12)-RuvC(2) complex forms which resolves the HJ. Mg(2+) is required as a cofactor.

Its subcellular location is the cytoplasm. The catalysed reaction is Endonucleolytic cleavage at a junction such as a reciprocal single-stranded crossover between two homologous DNA duplexes (Holliday junction).. Its function is as follows. The RuvA-RuvB-RuvC complex processes Holliday junction (HJ) DNA during genetic recombination and DNA repair. Endonuclease that resolves HJ intermediates. Cleaves cruciform DNA by making single-stranded nicks across the HJ at symmetrical positions within the homologous arms, yielding a 5'-phosphate and a 3'-hydroxyl group; requires a central core of homology in the junction. The consensus cleavage sequence is 5'-(A/T)TT(C/G)-3'. Cleavage occurs on the 3'-side of the TT dinucleotide at the point of strand exchange. HJ branch migration catalyzed by RuvA-RuvB allows RuvC to scan DNA until it finds its consensus sequence, where it cleaves and resolves the cruciform DNA. The protein is Crossover junction endodeoxyribonuclease RuvC of Wolbachia pipientis wMel.